A 359-amino-acid chain; its full sequence is Alanine racemase (359 aa).

K35 functions as the Proton acceptor; specific for D-alanine in the catalytic mechanism. K35 bears the N6-(pyridoxal phosphate)lysine mark. R130 is a binding site for substrate. The active-site Proton acceptor; specific for L-alanine is Y255. M303 contributes to the substrate binding site.

The protein belongs to the alanine racemase family. It depends on pyridoxal 5'-phosphate as a cofactor.

The catalysed reaction is L-alanine = D-alanine. It participates in amino-acid biosynthesis; D-alanine biosynthesis; D-alanine from L-alanine: step 1/1. In terms of biological role, catalyzes the interconversion of L-alanine and D-alanine. May also act on other amino acids. The chain is Alanine racemase (alr) from Janthinobacterium sp. (strain Marseille) (Minibacterium massiliensis).